The sequence spans 212 residues: Probable plastid-lipid-associated protein 11, chloroplastic (212 aa).

A chloroplast-targeting transit peptide spans 1–25 (MALALSLSACSPPLRRTRRAGFRTS).

This sequence belongs to the PAP/fibrillin family.

Its subcellular location is the plastid. It is found in the chloroplast thylakoid. The chain is Probable plastid-lipid-associated protein 11, chloroplastic (PAP11) from Arabidopsis thaliana (Mouse-ear cress).